The following is a 423-amino-acid chain: Diels-Alderase pyiF (423 aa).

The signal sequence occupies residues 1-17 (MLPSFIFVYSLLATATA). Asn60, Asn92, and Asn219 each carry an N-linked (GlcNAc...) asparagine glycan.

Belongs to the Diels-Alderase family.

It participates in mycotoxin biosynthesis. Diels-Alderase; part of the gene cluster that mediates the biosynthesis of the mycotoxin pyrichalasin H, a tyrosine-derived cytochalasan that inhibits the growth of rice seedlings, but also inhibits lymphocyte capping and actin polymerization and alters cell morphology. Pyrichalasin H is indicated as the responsible agent for the genus-specific pathogenicity of M.grisea toward crabgrass. The first step in the pathway is catalyzed by the O-methyltransferase pyiA which methylates free tyrosine to generate the precursor O-methyltyrosine. The hybrid PKS-NRPS pyiS, assisted by the enoyl reductase pyiC, are responsible for fusion of the O-methyltyrosine precursor and the polyketide backbone. The polyketide synthase module (PKS) of pyiS is responsible for the synthesis of the polyketide backbone and the downstream nonribosomal peptide synthetase (NRPS) amidates the carboxyl end of the polyketide with the O-methyltyrosine precursor. As the NRPS A-domain demonstrates substrate tolerance, pyiS can also use phenylalanine, tyrosine and even para-chlorophenylalanine as amino acid precursor, which leads to the production of novel cytochalasans, including halogenated cytochalasans. Because pyiS lacks a designated enoylreductase (ER) domain, the required activity is provided the enoyl reductase pyiC. Reduction by the hydrolyase pyiE leads to 1,5-dihydropyrrolone, which is substrate for dehydration and intra-molecular Diels-Alder cyclization by the Diels-Alderase pyiF to yield the required isoindolone-fused macrocycle. The tailoring cytochrome P450 monooxygenases piyD and piyG catalyze the hydroxylation at C-18 and C-7, respectivily, whereas the short-chain dehydrogenase/reductase pyiH reduces the carbonyl at C-21 in preparation for the transfer of an acetyl group by the acetyltransferase pyiB. These 3 reactions whose order is not clear yet, lead to the production of O-methylpyrichalasin J, a deacetylated pyrichalasin H. Finally, pyiB to converts O-methylpyrichalasin J into the final product pyrichalasin H via acetylation of C-21. This is Diels-Alderase pyiF from Pyricularia grisea (Crabgrass-specific blast fungus).